Reading from the N-terminus, the 652-residue chain is MKTRISELVSVLNQYAKEYYQLDQPSVSDAEYDTLYRELVELETAHPELILPDSPTHRVGGKMLDGFEKYSHVYPLFSLQDAFSREELEAFDQRVRKEFPQATYICELKIDGLSISLTYEAGNLVVGATRGDGSVGENITENLKRVADVPLTLPEAVDITVRGECYMPKASFDRVNKQRQEAGEAEFVNPRNAAAGTLRQLDTGVVAQRGLATFLYQEASPSEATSQSQVLEKLDALGFVTNHEYCLAESIDDTWDFIEKIAERRDDLPYEIDGVVIKVNDLAIQEELGFTVKAPRWAVAYKFPAEEKEAEILSVDWTVGRTGVVTPTANLSPVQLAGTTVSRATLHNVDYIAEKDIRIGDTVIVYKAGDIIPAVLKVVDKYRKEQEIMPIPSHCPSCQSDLQHYEDEVALRCINPICPSQLMSKLEHFASRDAMNIAGLGSSIVEKLFGAGLVHDVADIYKLTVDDLLTLEGFKEKSANKLYQAIQTSKSNSAECLLFGLGIRHVGSKASKILVEKFGDLETLAFADQEAIASLEGLGQVIAKSLTTFFASEGAQQLLAELKEAKVNLTYLGQVVDENAALSGMTVVLTGKLERMKRNEAKAKLEALGANVAGSVSKKTNLVVAGTDAGSTLTKAQELGIEIKDEAWLESL.

NAD(+)-binding positions include 29–33 (DAEYD), 78–79 (SL), and glutamate 107. The active-site N6-AMP-lysine intermediate is the lysine 109. Residues arginine 130, glutamate 164, lysine 278, and lysine 302 each coordinate NAD(+). Positions 395, 398, 413, and 418 each coordinate Zn(2+). The 76-residue stretch at 577–652 (DENAALSGMT…IKDEAWLESL (76 aa)) folds into the BRCT domain.

This sequence belongs to the NAD-dependent DNA ligase family. LigA subfamily. Mg(2+) serves as cofactor. It depends on Mn(2+) as a cofactor.

It carries out the reaction NAD(+) + (deoxyribonucleotide)n-3'-hydroxyl + 5'-phospho-(deoxyribonucleotide)m = (deoxyribonucleotide)n+m + AMP + beta-nicotinamide D-nucleotide.. Its function is as follows. DNA ligase that catalyzes the formation of phosphodiester linkages between 5'-phosphoryl and 3'-hydroxyl groups in double-stranded DNA using NAD as a coenzyme and as the energy source for the reaction. It is essential for DNA replication and repair of damaged DNA. This is DNA ligase from Streptococcus suis (strain 05ZYH33).